Reading from the N-terminus, the 46-residue chain is U1-plectoxin-Pt1f (46 aa).

5 disulfide bridges follow: Cys-4-Cys-18, Cys-11-Cys-24, Cys-17-Cys-35, Cys-21-Cys-44, and Cys-26-Cys-33.

Belongs to the neurotoxin 02 (plectoxin) family. 02 (plectoxin) subfamily. Expressed by the venom gland.

Its subcellular location is the secreted. In terms of biological role, potent toxin that may paralyze and/or kill insect pests such as H.virescens (lepidoptera), S.exigua (beet armyworm) and M.sexta (tobacco hornworm). This chain is U1-plectoxin-Pt1f, found in Plectreurys tristis (Spider).